Consider the following 86-residue polypeptide: Large ribosomal subunit protein bL27 (86 aa).

This sequence belongs to the bacterial ribosomal protein bL27 family.

This Xanthomonas oryzae pv. oryzae (strain PXO99A) protein is Large ribosomal subunit protein bL27.